A 160-amino-acid chain; its full sequence is Envelope glycoprotein L (160 aa).

An N-terminal signal peptide occupies residues 1–22 (MASHKWLLQMIVFLKTITIAYC). The interval 24–149 (HLQDDTPLFF…TNIPENGCVW (126 aa)) is interaction with gH. Positions 28–160 (DTPLFFGAKP…ADRLFQRVCQ (133 aa)) constitute a gL alphaherpesvirus-type domain. 2 cysteine pairs are disulfide-bonded: Cys-49/Cys-80 and Cys-147/Cys-159.

Belongs to the herpesviridae glycoprotein L (gL) family. Alphaherpesvirinae gL subfamily. In terms of assembly, interacts with glycoprotein H (gH); this interaction is necessary for the correct processing and cell surface expression of gH. The heterodimer gH/gL seems to interact with gB trimers during fusion.

The protein localises to the virion membrane. Its subcellular location is the host cell membrane. It is found in the host Golgi apparatus. It localises to the host trans-Golgi network. In terms of biological role, the heterodimer glycoprotein H-glycoprotein L is required for the fusion of viral and plasma membranes leading to virus entry into the host cell. Acts as a functional inhibitor of gH and maintains gH in an inhibited form. Upon binding to host integrins, gL dissociates from gH leading to activation of the viral fusion glycoproteins gB and gH. The polypeptide is Envelope glycoprotein L (Varicella-zoster virus (strain Oka vaccine) (HHV-3)).